A 436-amino-acid polypeptide reads, in one-letter code: Histidinol dehydrogenase (436 aa).

NAD(+) contacts are provided by Y135, Q196, and N219. Substrate contacts are provided by S242, Q264, and H267. Q264 and H267 together coordinate Zn(2+). Catalysis depends on proton acceptor residues E332 and H333. Residues H333, D366, E420, and H425 each contribute to the substrate site. Residue D366 participates in Zn(2+) binding. H425 is a binding site for Zn(2+).

The protein belongs to the histidinol dehydrogenase family. Zn(2+) serves as cofactor.

It catalyses the reaction L-histidinol + 2 NAD(+) + H2O = L-histidine + 2 NADH + 3 H(+). The protein operates within amino-acid biosynthesis; L-histidine biosynthesis; L-histidine from 5-phospho-alpha-D-ribose 1-diphosphate: step 9/9. Catalyzes the sequential NAD-dependent oxidations of L-histidinol to L-histidinaldehyde and then to L-histidine. The polypeptide is Histidinol dehydrogenase (Methylococcus capsulatus (strain ATCC 33009 / NCIMB 11132 / Bath)).